The chain runs to 712 residues: MRLLLCKNWFASPVISPLLYTRSLYSMANTTSFPIAPQAPPNWSFTPSDISGKTNEIINNSNNFYDSMSKVESPSVSNFVEPFMKFENELGPIINQLTFLQHVSSDKEIRDASVNSSMKLDELNIDLSLRHDIFLQFARVWQDVQSKADSVERETFKYVEKSYKDYIHSGLELDEGNRLKIKEIKKKISVNSINFSKNLGEQKEYITFTKEQLEGVPDSILTQFETIKSDKDSNETLYKVTFKYPDIFPVMKLASSAQTRKQAFLADQNKVPENEAILLDTLKLRDELASLLGYDTYANYNLYDKMAEDSTTVMNFLNDLKDKLIPLGRKELQVLQDMKAEDVKKLNQGADPNYYIWDHRYYDNKYLLENFNVDLEKISEYFPLEATITGMLEIYETLFNLKFIETKDSQNKSVWHDDVKQIAVWNMDDPKSPNFVGWIYFDLHPRDGKYGHAANFGLSSSFMIDDTTRSYPVTALVCNFSKSTKDKPSLLKHNEIVTFFHELGHGIHDLVGQNKESRFNGPGSVPWDFVEAPSQMLEFWTWNKNELINLSSHYKTGEKIPESLINSLIKTKHVNGALFTLRQLHFGLFDMKVHTCKDLQNLSICDTWNQLRQDISLISNGGTLSKGYDSFGHIMSDSYSAGYYGYLWAEVFATDMYHTKFAKDPLNAKNGIQYRDIVLARGGLYDINDNLKEFLGREPSKDAFLKELGLQN.

Position 73 is a phosphoserine (Ser-73). His-501 is a Zn(2+) binding site. Residue Glu-502 is part of the active site. Zn(2+) contacts are provided by His-505 and His-508.

This sequence belongs to the peptidase M3 family. It depends on Zn(2+) as a cofactor.

It is found in the cytoplasm. The catalysed reaction is Cleavage of Pro-|-Phe and Ala-|-Ala bonds.. Functionally, could be involved in late stage of protein degradation. In Saccharomyces cerevisiae (strain ATCC 204508 / S288c) (Baker's yeast), this protein is Saccharolysin (PRD1).